The chain runs to 521 residues: Bifunctional purine biosynthesis protein PurH (521 aa).

Positions 1-145 (MIKQALISVS…KNHRDVTVVV (145 aa)) constitute an MGS-like domain.

This sequence belongs to the PurH family.

The enzyme catalyses (6R)-10-formyltetrahydrofolate + 5-amino-1-(5-phospho-beta-D-ribosyl)imidazole-4-carboxamide = 5-formamido-1-(5-phospho-D-ribosyl)imidazole-4-carboxamide + (6S)-5,6,7,8-tetrahydrofolate. It carries out the reaction IMP + H2O = 5-formamido-1-(5-phospho-D-ribosyl)imidazole-4-carboxamide. It functions in the pathway purine metabolism; IMP biosynthesis via de novo pathway; 5-formamido-1-(5-phospho-D-ribosyl)imidazole-4-carboxamide from 5-amino-1-(5-phospho-D-ribosyl)imidazole-4-carboxamide (10-formyl THF route): step 1/1. It participates in purine metabolism; IMP biosynthesis via de novo pathway; IMP from 5-formamido-1-(5-phospho-D-ribosyl)imidazole-4-carboxamide: step 1/1. The sequence is that of Bifunctional purine biosynthesis protein PurH from Paraburkholderia phytofirmans (strain DSM 17436 / LMG 22146 / PsJN) (Burkholderia phytofirmans).